Here is a 98-residue protein sequence, read N- to C-terminus: ATP synthase subunit c (98 aa).

2 helical membrane passes run 27–47 (ALAL…GLGL) and 73–93 (IIGA…FFVV).

The protein belongs to the ATPase C chain family. As to quaternary structure, F-type ATPases have 2 components, F(1) - the catalytic core - and F(0) - the membrane proton channel. F(1) has five subunits: alpha(3), beta(3), gamma(1), delta(1), epsilon(1). F(0) has three main subunits: a(1), b(2) and c(10-14). The alpha and beta chains form an alternating ring which encloses part of the gamma chain. F(1) is attached to F(0) by a central stalk formed by the gamma and epsilon chains, while a peripheral stalk is formed by the delta and b chains.

The protein localises to the cell inner membrane. Functionally, f(1)F(0) ATP synthase produces ATP from ADP in the presence of a proton or sodium gradient. F-type ATPases consist of two structural domains, F(1) containing the extramembraneous catalytic core and F(0) containing the membrane proton channel, linked together by a central stalk and a peripheral stalk. During catalysis, ATP synthesis in the catalytic domain of F(1) is coupled via a rotary mechanism of the central stalk subunits to proton translocation. Key component of the F(0) channel; it plays a direct role in translocation across the membrane. A homomeric c-ring of between 10-14 subunits forms the central stalk rotor element with the F(1) delta and epsilon subunits. This Protochlamydia amoebophila (strain UWE25) protein is ATP synthase subunit c.